We begin with the raw amino-acid sequence, 146 residues long: UPF0260 protein Sbal_1871 (146 aa).

The protein belongs to the UPF0260 family.

The polypeptide is UPF0260 protein Sbal_1871 (Shewanella baltica (strain OS155 / ATCC BAA-1091)).